A 933-amino-acid chain; its full sequence is uncharacterized protein (933 aa).

Residues 244 to 255 are compositionally biased toward basic and acidic residues; sequence KKDIGAKPKPVD. Disordered stretches follow at residues 244 to 277 and 343 to 364; these read KKDI…ELPD and SAPH…EWKG. The span at 343–353 shows a compositional bias: polar residues; that stretch reads SAPHQPSSQHA. Residues 771-791 form a helical membrane-spanning segment; sequence VIHGMVLMFAGGKLLFGGCVL. Over residues 890–907 the composition is skewed to basic and acidic residues; the sequence is DKIEKEPPPSPEKVKPPE. The interval 890–933 is disordered; that stretch reads DKIEKEPPPSPEKVKPPEIELQPFTKMRRSSKKTAGFKKLNSKK. The span at 915 to 933 shows a compositional bias: basic residues; it reads KMRRSSKKTAGFKKLNSKK.

It localises to the membrane. This is an uncharacterized protein from Mus musculus (Mouse).